We begin with the raw amino-acid sequence, 369 residues long: 4-hydroxy-3-methylbut-2-en-1-yl diphosphate synthase (flavodoxin) (369 aa).

Cysteine 270, cysteine 273, cysteine 305, and glutamate 312 together coordinate [4Fe-4S] cluster.

This sequence belongs to the IspG family. It depends on [4Fe-4S] cluster as a cofactor.

It carries out the reaction (2E)-4-hydroxy-3-methylbut-2-enyl diphosphate + oxidized [flavodoxin] + H2O + 2 H(+) = 2-C-methyl-D-erythritol 2,4-cyclic diphosphate + reduced [flavodoxin]. The protein operates within isoprenoid biosynthesis; isopentenyl diphosphate biosynthesis via DXP pathway; isopentenyl diphosphate from 1-deoxy-D-xylulose 5-phosphate: step 5/6. Functionally, converts 2C-methyl-D-erythritol 2,4-cyclodiphosphate (ME-2,4cPP) into 1-hydroxy-2-methyl-2-(E)-butenyl 4-diphosphate. The chain is 4-hydroxy-3-methylbut-2-en-1-yl diphosphate synthase (flavodoxin) from Pseudomonas fluorescens (strain Pf0-1).